The sequence spans 221 residues: PKHD-type hydroxylase P9515_13321 (221 aa).

Residues 80–174 (TIHGIMFTKS…RLVCVGWIES (95 aa)) enclose the Fe2OG dioxygenase domain. Fe cation-binding residues include H98, D100, and H155. A 2-oxoglutarate-binding site is contributed by R165.

It depends on Fe(2+) as a cofactor. Requires L-ascorbate as cofactor.

This Prochlorococcus marinus (strain MIT 9515) protein is PKHD-type hydroxylase P9515_13321.